The sequence spans 243 residues: Venom nerve growth factor 3 (243 aa).

The N-terminal stretch at 1-18 (MSMLCYTLIIAFLIGIWA) is a signal peptide. Positions 19–125 (APKSEDNVPL…ALNRNIRAKR (107 aa)) are excised as a propeptide. Basic and acidic residues predominate over residues 47-66 (GLKTSRNTDQRHPAPKKAED). The disordered stretch occupies residues 47-67 (GLKTSRNTDQRHPAPKKAEDQ). Disulfide bonds link Cys139–Cys204, Cys182–Cys232, and Cys192–Cys234. Asn148 and Asn151 each carry an N-linked (GlcNAc...) asparagine glycan.

Belongs to the NGF-beta family. Homodimer; non-covalently linked. As to expression, expressed by the venom gland.

Its subcellular location is the secreted. Its function is as follows. Nerve growth factor is important for the development and maintenance of the sympathetic and sensory nervous systems. It stimulates division and differentiation of sympathetic and embryonic sensory neurons as well as basal forebrain cholinergic neurons in the brain. Its relevance in the snake venom is not clear. However, it has been shown to inhibit metalloproteinase-dependent proteolysis of platelet glycoprotein Ib alpha, suggesting a metalloproteinase inhibition to prevent metalloprotease autodigestion and/or protection against prey proteases. Binds a lipid between the two protein chains in the homodimer. The lipid-bound form promotes histamine relase from mouse mast cells, contrary to the lipid-free form. The protein is Venom nerve growth factor 3 of Tropidechis carinatus (Australian rough-scaled snake).